A 428-amino-acid chain; its full sequence is Transcription factor bHLH91 (428 aa).

The 50-residue stretch at 210 to 259 folds into the bHLH domain; sequence KRKNKPFTTERERRCHLNERYEALKLLIPSPSKGDRASILQDGIDYINEL. Residues 278–320 form a disordered region; it reads RHKNNEVDDNNNNKNLDDHGNEDDDDDDENMEKKPESDVIDQC. The span at 297–307 shows a compositional bias: acidic residues; that stretch reads GNEDDDDDDEN.

In terms of assembly, homodimer. In terms of tissue distribution, flowers.

It localises to the nucleus. This chain is Transcription factor bHLH91 (BHLH91), found in Arabidopsis thaliana (Mouse-ear cress).